The chain runs to 117 residues: Immunoglobulin heavy variable 3-74 (117 aa).

Positions 1-19 (MEFGLSWVFLVAILKGVQC) are cleaved as a signal peptide. Residues 20–44 (EVQLVESGGGLVQPGGSLRLSCAAS) form a framework-1 region. One can recognise an Ig-like domain in the interval 20–117 (EVQLVESGGG…EDTAVYYCAR (98 aa)). A disulfide bridge links Cys41 with Cys115. The tract at residues 45 to 52 (GFTFSSYW) is complementarity-determining-1. The framework-2 stretch occupies residues 53 to 69 (MHWVRQAPGKGLVWVSR). Residues 70–77 (INSDGSST) are complementarity-determining-2. A framework-3 region spans residues 78–115 (SYADSVKGRFTISRDNAKNTLYLQMNSLRAEDTAVYYC). A complementarity-determining-3 region spans residues 116-117 (AR).

In terms of assembly, immunoglobulins are composed of two identical heavy chains and two identical light chains; disulfide-linked.

The protein localises to the secreted. Its subcellular location is the cell membrane. Its function is as follows. V region of the variable domain of immunoglobulin heavy chains that participates in the antigen recognition. Immunoglobulins, also known as antibodies, are membrane-bound or secreted glycoproteins produced by B lymphocytes. In the recognition phase of humoral immunity, the membrane-bound immunoglobulins serve as receptors which, upon binding of a specific antigen, trigger the clonal expansion and differentiation of B lymphocytes into immunoglobulins-secreting plasma cells. Secreted immunoglobulins mediate the effector phase of humoral immunity, which results in the elimination of bound antigens. The antigen binding site is formed by the variable domain of one heavy chain, together with that of its associated light chain. Thus, each immunoglobulin has two antigen binding sites with remarkable affinity for a particular antigen. The variable domains are assembled by a process called V-(D)-J rearrangement and can then be subjected to somatic hypermutations which, after exposure to antigen and selection, allow affinity maturation for a particular antigen. The polypeptide is Immunoglobulin heavy variable 3-74 (Homo sapiens (Human)).